A 40-amino-acid polypeptide reads, in one-letter code: MGAAGKEGAQCQGGDVCELVRHRLTMQADVLESGGVCGRI.

This is an uncharacterized protein from Treponema pallidum (strain Nichols).